A 125-amino-acid polypeptide reads, in one-letter code: Multifunctional methyltransferase subunit TRM112-like protein (125 aa).

Residues 2-119 (RLLTHNLLSS…SRGIPNMLLS (118 aa)) enclose the TRM112 domain. Residue S119 is modified to Phosphoserine.

The protein belongs to the TRM112 family. Part of the heterodimeric BUD23-TRM112 methyltransferase complex; this heterodimerization is necessary for the metabolic stability and activity of the catalytic subunit BUD23. Part of the heterodimeric N6AMT1-TRM112 methyltransferase complex; this heterodimerization is necessary for S-adenosyl-L-methionine-binding to N6AMT1/HEMK2. Part of the heterodimeric ALKBH8-TRM112 methyltransferase complex. Part of the heterodimeric METTL5-TRM112 methyltransferase complex; this heterodimerization is necessary for the stability of the catalytic subunit METTL5. Part of the heterodimeric THUMPD3-TRM112 methyltransferase complex; this complex forms an active tRNA methyltransferase, where TRMT112 acts as an activator of the catalytic subunit THUMPD3. Part of the heterodimeric THUMPD2-TRM112 methyltransferase complex; this complex forms an active tRNA methyltransferase, where TRMT112 acts as an activator of the catalytic subunit THUMPD2. Part of the heterodimeric TRMT11-TRM112 methyltransferase complex; this complex forms an active tRNA methyltransferase, where TRMT112 acts as an activator of the catalytic subunit TRMT11.

Its subcellular location is the nucleus. The protein resides in the nucleoplasm. It localises to the cytoplasm. The protein localises to the perinuclear region. Acts as an activator of both rRNA/tRNA and protein methyltransferases. Together with methyltransferase BUD23, methylates the N(7) position of a guanine in 18S rRNA. The heterodimer with HEMK2/N6AMT1 catalyzes N5-methylation of ETF1 on 'Gln-185', using S-adenosyl L-methionine as methyl donor. The heterodimer with ALKBH8 catalyzes the methylation of 5-carboxymethyl uridine to 5-methylcarboxymethyl uridine at the wobble position of the anticodon loop in target tRNA species. Together with methyltransferase THUMPD3, catalyzes the formation of N(2)-methylguanosine at position 6 in a broad range of tRNA substrates and at position 7 of tRNA(Trp). Involved in the pre-rRNA processing steps leading to small-subunit rRNA production. Together with methyltransferase METTL5, specifically methylates the 6th position of adenine in position 1832 of 18S rRNA. The polypeptide is Multifunctional methyltransferase subunit TRM112-like protein (TRMT112) (Bos taurus (Bovine)).